The chain runs to 177 residues: Large ribosomal subunit protein uL6 (177 aa).

This sequence belongs to the universal ribosomal protein uL6 family. As to quaternary structure, part of the 50S ribosomal subunit.

In terms of biological role, this protein binds to the 23S rRNA, and is important in its secondary structure. It is located near the subunit interface in the base of the L7/L12 stalk, and near the tRNA binding site of the peptidyltransferase center. The sequence is that of Large ribosomal subunit protein uL6 from Paramagnetospirillum magneticum (strain ATCC 700264 / AMB-1) (Magnetospirillum magneticum).